A 272-amino-acid polypeptide reads, in one-letter code: Probable proteasome subunit beta type-5 (272 aa).

Positions M1 to G61 are cleaved as a propeptide — removed in mature form. T62 acts as the Nucleophile in catalysis.

This sequence belongs to the peptidase T1B family. The 26S proteasome consists of a 20S proteasome core and two 19S regulatory subunits. The 20S proteasome core is composed of 28 subunits that are arranged in four stacked rings, resulting in a barrel-shaped structure. The two end rings are each formed by seven alpha subunits, and the two central rings are each formed by seven beta subunits. The catalytic chamber with the active sites is on the inside of the barrel.

It is found in the cytoplasm. The protein localises to the nucleus. It carries out the reaction Cleavage of peptide bonds with very broad specificity.. In terms of biological role, the proteasome is a multicatalytic proteinase complex which is characterized by its ability to cleave peptides with Arg, Phe, Tyr, Leu, and Glu adjacent to the leaving group at neutral or slightly basic pH. The proteasome has an ATP-dependent proteolytic activity. The protein is Probable proteasome subunit beta type-5 (pts1) of Schizosaccharomyces pombe (strain 972 / ATCC 24843) (Fission yeast).